The primary structure comprises 389 residues: tRNA-specific 2-thiouridylase MnmA (389 aa).

ATP-binding positions include 35-42 (GMSGGVDS) and Met-61. The tract at residues 121–123 (NPD) is interaction with target base in tRNA. Cys-126 serves as the catalytic Nucleophile. An intrachain disulfide couples Cys-126 to Cys-223. Gly-151 provides a ligand contact to ATP. An interaction with tRNA region spans residues 173-175 (KDQ). The active-site Cysteine persulfide intermediate is the Cys-223. An interaction with tRNA region spans residues 335-336 (RY).

Belongs to the MnmA/TRMU family.

The protein resides in the cytoplasm. It carries out the reaction S-sulfanyl-L-cysteinyl-[protein] + uridine(34) in tRNA + AH2 + ATP = 2-thiouridine(34) in tRNA + L-cysteinyl-[protein] + A + AMP + diphosphate + H(+). Catalyzes the 2-thiolation of uridine at the wobble position (U34) of tRNA, leading to the formation of s(2)U34. This Actinobacillus succinogenes (strain ATCC 55618 / DSM 22257 / CCUG 43843 / 130Z) protein is tRNA-specific 2-thiouridylase MnmA.